Reading from the N-terminus, the 146-residue chain is UPF0178 protein BcerKBAB4_2842 (146 aa).

Belongs to the UPF0178 family.

The chain is UPF0178 protein BcerKBAB4_2842 from Bacillus mycoides (strain KBAB4) (Bacillus weihenstephanensis).